The chain runs to 296 residues: Origin of replication complex subunit 6 (296 aa).

The interval 212–296 (PSKRKHDDDS…MALEVSSAAN (85 aa)) is disordered. Over residues 220–236 (DSDSSGESSGDDQDELD) the composition is skewed to acidic residues. Polar residues predominate over residues 254-264 (WKSSVLSSNKQ).

Belongs to the ORC6 family. As to quaternary structure, component of the origin recognition complex (ORC) composed of at least ORC1, ORC2, ORC3, ORC4, ORC5 and ORC6. ORC is regulated in a cell-cycle and development dependent manner. It is sequentially assembled at the exit from anaphase of mitosis and disassembled as cells enter S phase.

Its subcellular location is the nucleus. Functionally, component of the origin recognition complex (ORC) that binds origins of replication. DNA-binding is ATP-dependent. The specific DNA sequences that define origins of replication have not been identified yet. ORC is required to assemble the pre-replication complex necessary to initiate DNA replication. The sequence is that of Origin of replication complex subunit 6 from Oryza sativa subsp. indica (Rice).